We begin with the raw amino-acid sequence, 261 residues long: 3-deoxy-manno-octulosonate cytidylyltransferase (261 aa).

The protein belongs to the KdsB family.

The protein localises to the cytoplasm. The enzyme catalyses 3-deoxy-alpha-D-manno-oct-2-ulosonate + CTP = CMP-3-deoxy-beta-D-manno-octulosonate + diphosphate. The protein operates within nucleotide-sugar biosynthesis; CMP-3-deoxy-D-manno-octulosonate biosynthesis; CMP-3-deoxy-D-manno-octulosonate from 3-deoxy-D-manno-octulosonate and CTP: step 1/1. It participates in bacterial outer membrane biogenesis; lipopolysaccharide biosynthesis. Functionally, activates KDO (a required 8-carbon sugar) for incorporation into bacterial lipopolysaccharide in Gram-negative bacteria. The polypeptide is 3-deoxy-manno-octulosonate cytidylyltransferase (Marinobacter nauticus (strain ATCC 700491 / DSM 11845 / VT8) (Marinobacter aquaeolei)).